Consider the following 347-residue polypeptide: NADH-quinone oxidoreductase subunit H 1 (347 aa).

9 helical membrane-spanning segments follow: residues 13 to 33 (IIMIGQSLLLLVCLLVFIAYV), 50 to 70 (PNVVGPFGLFQSFADLLKFVF), 82 to 102 (AVFLLAPLVTVLLALSTWAVV), 115 to 135 (VGILYIFAISSLEVYGIIMGG), 161 to 181 (IGFVIVTVLLCVGSLNLTDIV), 198 to 218 (FLDWHWLSLFPMFIVFFISAL), 263 to 283 (CALTTILFLGGWLPPVDIWIL), 286 to 306 (VPGIIWFTLKACLVFFMFAMV), and 321 to 341 (LGWKVFLPLSLAMVIIVAFVL).

It belongs to the complex I subunit 1 family. NDH-1 is composed of 14 different subunits. Subunits NuoA, H, J, K, L, M, N constitute the membrane sector of the complex.

The protein localises to the cell inner membrane. The catalysed reaction is a quinone + NADH + 5 H(+)(in) = a quinol + NAD(+) + 4 H(+)(out). NDH-1 shuttles electrons from NADH, via FMN and iron-sulfur (Fe-S) centers, to quinones in the respiratory chain. The immediate electron acceptor for the enzyme in this species is believed to be ubiquinone. Couples the redox reaction to proton translocation (for every two electrons transferred, four hydrogen ions are translocated across the cytoplasmic membrane), and thus conserves the redox energy in a proton gradient. This subunit may bind ubiquinone. The sequence is that of NADH-quinone oxidoreductase subunit H 1 from Rhizobium etli (strain ATCC 51251 / DSM 11541 / JCM 21823 / NBRC 15573 / CFN 42).